The primary structure comprises 263 residues: uncharacterized protein (263 aa).

The interval 183–263 (APHDRPEGVP…PPSTNTKGAA (81 aa)) is disordered. Composition is skewed to polar residues over residues 230–239 (SRPTAPSRPS) and 253–263 (TPPSTNTKGAA).

In terms of biological role, probably does not play a direct role in plasmid integration or excision. This is an uncharacterized protein from Saccharopolyspora erythraea (Streptomyces erythraeus).